The following is a 1486-amino-acid chain: MIERGKFRSLTLINWNGFFARTFDLDELVTTLSGGNGAGKSTTMAAFVTALIPDLTLLHFRNTTEAGATSGSRDKGLHGKLKAGVCYSMLDTINSRHQRVVVGVRLQQVAGRDRKVDIKPFAIQGLPMSVQPTQLVTETLNERQARVLPLNELKDKLEAMEGVQFKQFNSITDYHSLMFDLGIIARRLRSASDRSKFYRLIEASLYGGISSAITRSLRDYLLPENSGVRKAFQDMEAALRENRMTLEAIRVTQSDRDLFKHLISEATNYVAADYMRHANERRVHLDKALEFRRELHTSRQQLAAEQYKHVDMARELAEHNGAEGDLEADYQAASDHLNLVQTALRQQEKIERYEADLDELQIRLEEQNEVVAEAIERQEENEARAEAAELEVDELKSQLADYQQALDVQQTRAIQYNQAIAALNRAKELCHLPDLTADSAAEWLETFQAKELEATEKMLSLEQKMSMAQTAHSQFEQAYQLVVAINGPLARNEAWDVARELLREGVDQRHLAEQVQPLRMRLSELEQRLREQQEAERLLADFCKRQGKNFDIDELEALHQELEARIASLSDSVSNAREERMALRQEQEQLQSRIQSLMQRAPVWLAAQNSLNQLSEQCGEEFSSSQDVTEYLQQLLEREREAIVERDEVGARKNAVDEEIERLSQPGGSEDQRLNALAERFGGVLLSEIYDDVSLEDAPYFSALYGPSRHAIVVPDLSQVTEHLEGLTDCPEDLYLIEGDPQSFDDSVFSVDELEKAVVVKIADRQWRYSRFPEVPLFGRAARESRIESLHAEREVLSERFATLSFDVQKTQRLHQAFSRFIGSHLAVAFESDPEAEIRQLNSRRVELERALSNHENDNQQQRIQFEQAKEGVTALNRILPRLNLLADDSLADRVDEIRERLDEAQEAARFVQQFGNQLAKLEPIVSVLQSDPEQFEQLKEDYAYSQQMQRDARQQAFALTEVVQRRAHFSYSDSAEMLSGNSDLNEKLRERLEQAEAERTRAREALRGHAVQLNQYNQVLASLKSSYDTKKELLNDLQRELQDIGVRADSGAEERARIRRDELHAQLSNNRSRRNQLEKALTFCEAEMDNLTRKLRKLERDYFEMREQVVTAKAGWCAVMRMVKDNGVERRLHRRELAYLSADDLRSMSDKALGALRLAVADNEHLRDVLRMSEDPKRPERKIQFFVAVYQHLRERIRQDIIRTDDPVEAIEQMEIELSRLTEELTSREQKLAISSRSVANIIRKTIQREQNRIRMLNQGLQNVSFGQVNSVRLNVNVRETHAMLLDVLSEQHEQHQDLFNSNRLTFSEALAKLYQRLNPQIDMGQRTPQTIGEELLDYRNYLEMEVEVNRGSDGWLRAESGALSTGEAIGTGMSILVMVVQSWEDESRRLRGKDISPCRLLFLDEAARLDARSIATLFELCERLQMQLIIAAPENISPEKGTTYKLVRKVFQNTEHVHVVGLRGFAPQLPETLPGSDEAPSQAS.

Position 34-41 (34-41 (GGNGAGKS)) interacts with ATP. 3 coiled-coil regions span residues 326 to 418 (LEAD…QYNQ), 444 to 480 (LETF…QAYQ), and 509 to 603 (RHLA…RAPV). The segment at 666–783 (PGGSEDQRLN…EVPLFGRAAR (118 aa)) is flexible hinge. 3 coiled-coil regions span residues 835–923 (EAEI…AKLE), 977–1115 (EMLS…TAKA), and 1209–1266 (VEAI…QNVS).

This sequence belongs to the SMC family. MukB subfamily. As to quaternary structure, homodimerization via its hinge domain. Binds to DNA via its C-terminal region. Interacts, and probably forms a ternary complex, with MukE and MukF via its C-terminal region. The complex formation is stimulated by calcium or magnesium. Interacts with tubulin-related protein FtsZ.

It localises to the cytoplasm. Its subcellular location is the nucleoid. In terms of biological role, plays a central role in chromosome condensation, segregation and cell cycle progression. Functions as a homodimer, which is essential for chromosome partition. Involved in negative DNA supercoiling in vivo, and by this means organize and compact chromosomes. May achieve or facilitate chromosome segregation by condensation DNA from both sides of a centrally located replisome during cell division. The sequence is that of Chromosome partition protein MukB from Escherichia coli O81 (strain ED1a).